The chain runs to 282 residues: Phosphoglycerate mutase-like protein 1 (282 aa).

Catalysis depends on H23, which acts as the Tele-phosphohistidine intermediate. Residue E135 is the Proton donor/acceptor of the active site.

The protein belongs to the phosphoglycerate mutase family.

Its function is as follows. May play a role in carbohydrates metabolism. This is Phosphoglycerate mutase-like protein 1 from Arabidopsis thaliana (Mouse-ear cress).